The chain runs to 115 residues: U3-lycotoxin-Ls1d (115 aa).

Positions 1–20 (MKFVLLFGVLLVTLFSYSSA) are cleaved as a signal peptide. Residues 21 to 44 (EMLDDFDQADEDELLSLIEKEEAR) constitute a propeptide that is removed on maturation. Intrachain disulfides connect cysteine 48–cysteine 63, cysteine 55–cysteine 72, cysteine 62–cysteine 87, and cysteine 74–cysteine 85.

Belongs to the neurotoxin 19 (CSTX) family. 01 subfamily. Expressed by the venom gland.

It localises to the secreted. The sequence is that of U3-lycotoxin-Ls1d from Lycosa singoriensis (Wolf spider).